Consider the following 322-residue polypeptide: Manganese-dependent ADP-ribose/CDP-alcohol diphosphatase (322 aa).

Positions 13, 15, 60, 96, 228, 265, and 267 each coordinate Zn(2+).

It belongs to the ADPRibase-Mn family. Monomer. Mg(2+) is required as a cofactor.

The enzyme catalyses CDP-choline + H2O = phosphocholine + CMP + 2 H(+). It carries out the reaction ADP-D-ribose + H2O = D-ribose 5-phosphate + AMP + 2 H(+). The catalysed reaction is CDP-glycerol + H2O = sn-glycerol 3-phosphate + CMP + 2 H(+). Hydrolyzes ADP-ribose, IDP-ribose, CDP-glycerol, CDP-choline and CDP-ethanolamine, but not other non-reducing ADP-sugars or CDP-glucose. The protein is Manganese-dependent ADP-ribose/CDP-alcohol diphosphatase (adprm) of Danio rerio (Zebrafish).